A 269-amino-acid chain; its full sequence is 3-methyl-2-oxobutanoate hydroxymethyltransferase (269 aa).

Residues D50 and D89 each coordinate Mg(2+). 3-methyl-2-oxobutanoate-binding positions include 50 to 51, D89, and K118; that span reads DS. E120 is a Mg(2+) binding site. Catalysis depends on E187, which acts as the Proton acceptor.

It belongs to the PanB family. Homodecamer; pentamer of dimers. The cofactor is Mg(2+).

The protein localises to the cytoplasm. It carries out the reaction 3-methyl-2-oxobutanoate + (6R)-5,10-methylene-5,6,7,8-tetrahydrofolate + H2O = 2-dehydropantoate + (6S)-5,6,7,8-tetrahydrofolate. It participates in cofactor biosynthesis; (R)-pantothenate biosynthesis; (R)-pantoate from 3-methyl-2-oxobutanoate: step 1/2. In terms of biological role, catalyzes the reversible reaction in which hydroxymethyl group from 5,10-methylenetetrahydrofolate is transferred onto alpha-ketoisovalerate to form ketopantoate. The sequence is that of 3-methyl-2-oxobutanoate hydroxymethyltransferase from Nitrosomonas europaea (strain ATCC 19718 / CIP 103999 / KCTC 2705 / NBRC 14298).